The following is an 83-amino-acid chain: Short neurotoxin B (83 aa).

The N-terminal stretch at 1–21 (MKTLLLTLVVVTIVCLDLGYT) is a signal peptide. Intrachain disulfides connect Cys24–Cys45, Cys38–Cys62, Cys64–Cys75, and Cys76–Cys81.

This sequence belongs to the three-finger toxin family. Short-chain subfamily. Type I alpha-neurotoxin sub-subfamily. Expressed by the venom gland.

The protein resides in the secreted. In terms of biological role, binds to muscle nicotinic acetylcholine receptor (nAChR) and inhibit acetylcholine from binding to the receptor, thereby impairing neuromuscular transmission. The polypeptide is Short neurotoxin B (Laticauda laticaudata (Blue-ringed sea krait)).